Reading from the N-terminus, the 938-residue chain is Isoleucine--tRNA ligase (938 aa).

Residues 58-68 (PYANGSIHIGH) carry the 'HIGH' region motif. Lys183 is subject to N6-acetyllysine. Position 561 (Glu561) interacts with L-isoleucyl-5'-AMP. The 'KMSKS' region motif lies at 602–606 (KMSKS). Lys605 is a binding site for ATP. The Zn(2+) site is built by Cys901, Cys904, Cys921, and Cys924.

The protein belongs to the class-I aminoacyl-tRNA synthetase family. IleS type 1 subfamily. As to quaternary structure, monomer. It depends on Zn(2+) as a cofactor.

It localises to the cytoplasm. It carries out the reaction tRNA(Ile) + L-isoleucine + ATP = L-isoleucyl-tRNA(Ile) + AMP + diphosphate. In terms of biological role, catalyzes the attachment of isoleucine to tRNA(Ile). As IleRS can inadvertently accommodate and process structurally similar amino acids such as valine, to avoid such errors it has two additional distinct tRNA(Ile)-dependent editing activities. One activity is designated as 'pretransfer' editing and involves the hydrolysis of activated Val-AMP. The other activity is designated 'posttransfer' editing and involves deacylation of mischarged Val-tRNA(Ile). The protein is Isoleucine--tRNA ligase of Escherichia coli O7:K1 (strain IAI39 / ExPEC).